Here is a 140-residue protein sequence, read N- to C-terminus: Probable disulfide formation protein C 2 (140 aa).

The chain crosses the membrane as a helical span at residues 6 to 25; it reads KYHIAIAWTIATSAMLISLI. Residues C35 and C38 are joined by a disulfide bond. Helical transmembrane passes span 40-59 and 66-83; these read YQRM…MYRK and YAFP…YQIT. The cysteines at positions 95 and 101 are disulfide-linked. The chain crosses the membrane as a helical span at residues 110-134; sequence GFISIPMLSFVGFLAIIILLYINQI.

This sequence belongs to the DsbB family. BdbC subfamily.

It localises to the cell membrane. Functionally, required for disulfide bond formation in some proteins. This Bacillus anthracis protein is Probable disulfide formation protein C 2 (bdbC2).